A 215-amino-acid polypeptide reads, in one-letter code: Pyrrolidone-carboxylate peptidase (215 aa).

Active-site residues include E80, C143, and H167.

Belongs to the peptidase C15 family. In terms of assembly, homotetramer.

It is found in the cytoplasm. It carries out the reaction Release of an N-terminal pyroglutamyl group from a polypeptide, the second amino acid generally not being Pro.. Its function is as follows. Removes 5-oxoproline from various penultimate amino acid residues except L-proline. The sequence is that of Pyrrolidone-carboxylate peptidase from Bacillus thuringiensis subsp. konkukian (strain 97-27).